The sequence spans 266 residues: MHKKLTKEVDYMDAVLYVCHGSRVKEGADQAVAFIERCKKNLDVPIQEVCFLELASPTIEQGFEACIEQGATRIAIVPLLLLTAAHAKHDIPEEIQKVYERYPQVEVLYGEPFGVDERIVDILVERINETNVDKHEDSMVLLVGRGSSDPAVKRDLNEIAQLLKGKGAFKEVSTCYLAAASPNLKEGLHLAKRTSYKQVFVLPYLLFTGILMNEIKEELEQLSTDAQQFILANYLGYHDGLAHILSHQVKTLLSSKGNQYDVYRYA.

Fe cation is bound by residues His-20 and His-86.

The protein belongs to the CbiX family. SirB subfamily.

The catalysed reaction is siroheme + 2 H(+) = sirohydrochlorin + Fe(2+). It functions in the pathway porphyrin-containing compound metabolism; siroheme biosynthesis; siroheme from sirohydrochlorin: step 1/1. In terms of biological role, chelates iron to the siroheme precursor. This Priestia megaterium (Bacillus megaterium) protein is Sirohydrochlorin ferrochelatase (sirB).